A 110-amino-acid chain; its full sequence is MALTKADMVERLFSELGLNKRDAKELVDQFFEVIKASLESGRSVKLSGFGNFDLRDKRQRPGRNPKTGEEIPITARRVVTFKAGQKLKATVEALQEPELGKLDAERTGEV.

It belongs to the bacterial histone-like protein family. In terms of assembly, heterodimer of an alpha and a beta chain.

Its function is as follows. This protein is one of the two subunits of integration host factor, a specific DNA-binding protein that functions in genetic recombination as well as in transcriptional and translational control. This is Integration host factor subunit alpha from Methylococcus capsulatus (strain ATCC 33009 / NCIMB 11132 / Bath).